The sequence spans 480 residues: Glycogen synthase (480 aa).

K15 is an ADP-alpha-D-glucose binding site.

This sequence belongs to the glycosyltransferase 1 family. Bacterial/plant glycogen synthase subfamily.

The enzyme catalyses [(1-&gt;4)-alpha-D-glucosyl](n) + ADP-alpha-D-glucose = [(1-&gt;4)-alpha-D-glucosyl](n+1) + ADP + H(+). The protein operates within glycan biosynthesis; glycogen biosynthesis. Synthesizes alpha-1,4-glucan chains using ADP-glucose. This is Glycogen synthase from Rhizobium johnstonii (strain DSM 114642 / LMG 32736 / 3841) (Rhizobium leguminosarum bv. viciae).